Reading from the N-terminus, the 353-residue chain is Phosphate acyltransferase (353 aa).

This sequence belongs to the PlsX family. In terms of assembly, homodimer. Probably interacts with PlsY.

The protein resides in the cytoplasm. The catalysed reaction is a fatty acyl-[ACP] + phosphate = an acyl phosphate + holo-[ACP]. The protein operates within lipid metabolism; phospholipid metabolism. Its function is as follows. Catalyzes the reversible formation of acyl-phosphate (acyl-PO(4)) from acyl-[acyl-carrier-protein] (acyl-ACP). This enzyme utilizes acyl-ACP as fatty acyl donor, but not acyl-CoA. This Myxococcus xanthus (strain DK1622) protein is Phosphate acyltransferase.